The following is a 750-amino-acid chain: Photosystem I P700 chlorophyll a apoprotein A1 (750 aa).

Helical transmembrane passes span 70–93, 156–179, 195–219, 291–309, 346–369, 385–411, 433–455, and 531–549; these read VFSAHFGQLSIIFLWLSGMYFHGA, LYCTAIGALIFAALMLFAGWFHYH, LNHHLAGLLGLGSLSWAGHQIHVSL, IAHHHLAIAILFLIAGHMY, WHAQLSLNLAMLGSTTIVVAHHMY, LSLFTHHMWIGGFLIVGAAAHAAIFMV, AIISHLNWVCIFLGFHSFGLYIH, and FLVHHIHAFTIHVTVLILL. [4Fe-4S] cluster-binding residues include cysteine 573 and cysteine 582. A run of 2 helical transmembrane segments spans residues 589–610 and 664–686; these read HVFLGLFWMYNAISVVIFHFSW and LSAYGLFFLGAHFVWAFSLMFLF. Histidine 675 lines the chlorophyll a' pocket. 2 residues coordinate chlorophyll a: methionine 683 and tyrosine 691. Tryptophan 692 is a phylloquinone binding site. Residues 724–744 form a helical membrane-spanning segment; sequence AVGVTHYLLGGIATTWAFFLA.

The protein belongs to the PsaA/PsaB family. The PsaA/B heterodimer binds the P700 chlorophyll special pair and subsequent electron acceptors. PSI consists of a core antenna complex that captures photons, and an electron transfer chain that converts photonic excitation into a charge separation. The eukaryotic PSI reaction center is composed of at least 11 subunits. It depends on P700 is a chlorophyll a/chlorophyll a' dimer, A0 is one or more chlorophyll a, A1 is one or both phylloquinones and FX is a shared 4Fe-4S iron-sulfur center. as a cofactor.

The protein localises to the plastid. It is found in the chloroplast thylakoid membrane. It catalyses the reaction reduced [plastocyanin] + hnu + oxidized [2Fe-2S]-[ferredoxin] = oxidized [plastocyanin] + reduced [2Fe-2S]-[ferredoxin]. Its function is as follows. PsaA and PsaB bind P700, the primary electron donor of photosystem I (PSI), as well as the electron acceptors A0, A1 and FX. PSI is a plastocyanin-ferredoxin oxidoreductase, converting photonic excitation into a charge separation, which transfers an electron from the donor P700 chlorophyll pair to the spectroscopically characterized acceptors A0, A1, FX, FA and FB in turn. Oxidized P700 is reduced on the lumenal side of the thylakoid membrane by plastocyanin. The polypeptide is Photosystem I P700 chlorophyll a apoprotein A1 (Triticum aestivum (Wheat)).